A 383-amino-acid chain; its full sequence is S-adenosylmethionine:tRNA ribosyltransferase-isomerase (383 aa).

Belongs to the QueA family. Monomer.

It localises to the cytoplasm. It catalyses the reaction 7-aminomethyl-7-carbaguanosine(34) in tRNA + S-adenosyl-L-methionine = epoxyqueuosine(34) in tRNA + adenine + L-methionine + 2 H(+). It functions in the pathway tRNA modification; tRNA-queuosine biosynthesis. Transfers and isomerizes the ribose moiety from AdoMet to the 7-aminomethyl group of 7-deazaguanine (preQ1-tRNA) to give epoxyqueuosine (oQ-tRNA). This Rickettsia prowazekii (strain Madrid E) protein is S-adenosylmethionine:tRNA ribosyltransferase-isomerase.